Consider the following 185-residue polypeptide: Dirigent protein 12 (185 aa).

An N-terminal signal peptide occupies residues 1–25 (MTNQIYKQVFSFFLSVLLLQSSTVS). Cysteines 37 and 184 form a disulfide. Residues asparagine 56 and asparagine 120 are each glycosylated (N-linked (GlcNAc...) asparagine).

The protein belongs to the plant dirigent protein family. As to quaternary structure, homodimer. Seed coat specific expression.

It is found in the secreted. It localises to the extracellular space. The protein resides in the apoplast. Dirigent proteins impart stereoselectivity on the phenoxy radical-coupling reaction, yielding optically active lignans from two molecules of coniferyl alcohol in the biosynthesis of lignans, flavonolignans, and alkaloids and thus plays a central role in plant secondary metabolism. Required for seed accumulation of neolignans. The polypeptide is Dirigent protein 12 (DIR12) (Arabidopsis thaliana (Mouse-ear cress)).